A 586-amino-acid polypeptide reads, in one-letter code: U-box domain-containing protein 73 (586 aa).

Residues 21 to 122 (KADMSGLQRS…AAGADDGPTR (102 aa)) form a disordered region. Low complexity predominate over residues 50-60 (RSAPTSPLRTP). In terms of domain architecture, U-box spans 182-258 (PIPIAHDGTL…SAWCLDHSDL (77 aa)).

The catalysed reaction is S-ubiquitinyl-[E2 ubiquitin-conjugating enzyme]-L-cysteine + [acceptor protein]-L-lysine = [E2 ubiquitin-conjugating enzyme]-L-cysteine + N(6)-ubiquitinyl-[acceptor protein]-L-lysine.. It functions in the pathway protein modification; protein ubiquitination. In terms of biological role, possesses E3 ubiquitin-protein ligase in vitro. The polypeptide is U-box domain-containing protein 73 (PUB73) (Oryza sativa subsp. japonica (Rice)).